The primary structure comprises 344 residues: N-acetyl-gamma-glutamyl-phosphate reductase (344 aa).

The active site involves Cys148.

Belongs to the NAGSA dehydrogenase family. Type 1 subfamily.

It is found in the cytoplasm. The enzyme catalyses N-acetyl-L-glutamate 5-semialdehyde + phosphate + NADP(+) = N-acetyl-L-glutamyl 5-phosphate + NADPH + H(+). It functions in the pathway amino-acid biosynthesis; L-arginine biosynthesis; N(2)-acetyl-L-ornithine from L-glutamate: step 3/4. In terms of biological role, catalyzes the NADPH-dependent reduction of N-acetyl-5-glutamyl phosphate to yield N-acetyl-L-glutamate 5-semialdehyde. This chain is N-acetyl-gamma-glutamyl-phosphate reductase, found in Clostridium kluyveri (strain NBRC 12016).